We begin with the raw amino-acid sequence, 170 residues long: Probable Brix domain-containing ribosomal biogenesis protein (170 aa).

In terms of domain architecture, Brix spans 6 to 170; it reads TRIVITSSRD…IKFLKMILEA (165 aa).

Its function is as follows. Probably involved in the biogenesis of the ribosome. The polypeptide is Probable Brix domain-containing ribosomal biogenesis protein (Saccharolobus solfataricus (strain ATCC 35092 / DSM 1617 / JCM 11322 / P2) (Sulfolobus solfataricus)).